The primary structure comprises 138 residues: Large ribosomal subunit protein uL16 (138 aa).

Over residues 1-13 (MLQPARRKYRKEQ) the composition is skewed to basic residues. The tract at residues 1 to 22 (MLQPARRKYRKEQKGRNTGVAT) is disordered.

The protein belongs to the universal ribosomal protein uL16 family. Part of the 50S ribosomal subunit.

Functionally, binds 23S rRNA and is also seen to make contacts with the A and possibly P site tRNAs. The protein is Large ribosomal subunit protein uL16 of Paracidovorax citrulli (strain AAC00-1) (Acidovorax citrulli).